We begin with the raw amino-acid sequence, 214 residues long: Thiamine-phosphate synthase (214 aa).

4-amino-2-methyl-5-(diphosphooxymethyl)pyrimidine-binding positions include 37–41 and Asn73; that span reads QYREK. Residues Asp74 and Asp93 each contribute to the Mg(2+) site. Ser112 lines the 4-amino-2-methyl-5-(diphosphooxymethyl)pyrimidine pocket. Position 139–141 (139–141) interacts with 2-[(2R,5Z)-2-carboxy-4-methylthiazol-5(2H)-ylidene]ethyl phosphate; it reads TIS. Lys142 provides a ligand contact to 4-amino-2-methyl-5-(diphosphooxymethyl)pyrimidine. 2-[(2R,5Z)-2-carboxy-4-methylthiazol-5(2H)-ylidene]ethyl phosphate contacts are provided by residues Gly171 and 191 to 192; that span reads IS.

The protein belongs to the thiamine-phosphate synthase family. The cofactor is Mg(2+).

It catalyses the reaction 2-[(2R,5Z)-2-carboxy-4-methylthiazol-5(2H)-ylidene]ethyl phosphate + 4-amino-2-methyl-5-(diphosphooxymethyl)pyrimidine + 2 H(+) = thiamine phosphate + CO2 + diphosphate. It carries out the reaction 2-(2-carboxy-4-methylthiazol-5-yl)ethyl phosphate + 4-amino-2-methyl-5-(diphosphooxymethyl)pyrimidine + 2 H(+) = thiamine phosphate + CO2 + diphosphate. The catalysed reaction is 4-methyl-5-(2-phosphooxyethyl)-thiazole + 4-amino-2-methyl-5-(diphosphooxymethyl)pyrimidine + H(+) = thiamine phosphate + diphosphate. It functions in the pathway cofactor biosynthesis; thiamine diphosphate biosynthesis; thiamine phosphate from 4-amino-2-methyl-5-diphosphomethylpyrimidine and 4-methyl-5-(2-phosphoethyl)-thiazole: step 1/1. Its function is as follows. Condenses 4-methyl-5-(beta-hydroxyethyl)thiazole monophosphate (THZ-P) and 2-methyl-4-amino-5-hydroxymethyl pyrimidine pyrophosphate (HMP-PP) to form thiamine monophosphate (TMP). This Listeria monocytogenes serotype 4b (strain F2365) protein is Thiamine-phosphate synthase.